Here is a 599-residue protein sequence, read N- to C-terminus: uncharacterized protein (599 aa).

Residue 49 to 56 (GPPGSGKT) coordinates ATP. In terms of domain architecture, Macro spans 416 to 599 (AEVRKELEYK…TKIFEEKFSV (184 aa)).

In the N-terminal section; belongs to the AAA ATPase family. RarA/MGS1/WRNIP1 subfamily.

This is an uncharacterized protein from Thermotoga maritima (strain ATCC 43589 / DSM 3109 / JCM 10099 / NBRC 100826 / MSB8).